Here is a 227-residue protein sequence, read N- to C-terminus: Uracil-DNA glycosylase (227 aa).

Residue Asp-64 is the Proton acceptor of the active site.

This sequence belongs to the uracil-DNA glycosylase (UDG) superfamily. UNG family.

The protein resides in the cytoplasm. The enzyme catalyses Hydrolyzes single-stranded DNA or mismatched double-stranded DNA and polynucleotides, releasing free uracil.. In terms of biological role, excises uracil residues from the DNA which can arise as a result of misincorporation of dUMP residues by DNA polymerase or due to deamination of cytosine. The polypeptide is Uracil-DNA glycosylase (Alkaliphilus metalliredigens (strain QYMF)).